A 115-amino-acid polypeptide reads, in one-letter code: Meromycolate extension acyl carrier protein (115 aa).

A Carrier domain is found at 3–81; it reads VTQEEIIAGI…DVVTYIQKLE (79 aa). O-(pantetheine 4'-phosphoryl)serine is present on serine 41.

This sequence belongs to the acyl carrier protein (ACP) family. Post-translationally, 4'-phosphopantetheine is transferred from CoA to a specific serine of apo-AcpM.

It is found in the cytoplasm. Its function is as follows. Acyl carrier protein involved in meromycolate extension. This chain is Meromycolate extension acyl carrier protein (acpM), found in Mycobacterium leprae (strain TN).